The chain runs to 449 residues: Exodeoxyribonuclease 7 large subunit (449 aa).

This sequence belongs to the XseA family. In terms of assembly, heterooligomer composed of large and small subunits.

It localises to the cytoplasm. It catalyses the reaction Exonucleolytic cleavage in either 5'- to 3'- or 3'- to 5'-direction to yield nucleoside 5'-phosphates.. In terms of biological role, bidirectionally degrades single-stranded DNA into large acid-insoluble oligonucleotides, which are then degraded further into small acid-soluble oligonucleotides. This Aliivibrio fischeri (strain MJ11) (Vibrio fischeri) protein is Exodeoxyribonuclease 7 large subunit.